A 141-amino-acid polypeptide reads, in one-letter code: Aspartate 1-decarboxylase (141 aa).

Residue S25 is the Schiff-base intermediate with substrate; via pyruvic acid of the active site. Pyruvic acid (Ser) is present on S25. T57 is a substrate binding site. The Proton donor role is filled by Y58. 73–75 contacts substrate; the sequence is GAA.

Belongs to the PanD family. As to quaternary structure, heterooctamer of four alpha and four beta subunits. The cofactor is pyruvate. In terms of processing, is synthesized initially as an inactive proenzyme, which is activated by self-cleavage at a specific serine bond to produce a beta-subunit with a hydroxyl group at its C-terminus and an alpha-subunit with a pyruvoyl group at its N-terminus.

The protein resides in the cytoplasm. It catalyses the reaction L-aspartate + H(+) = beta-alanine + CO2. It participates in cofactor biosynthesis; (R)-pantothenate biosynthesis; beta-alanine from L-aspartate: step 1/1. Functionally, catalyzes the pyruvoyl-dependent decarboxylation of aspartate to produce beta-alanine. The sequence is that of Aspartate 1-decarboxylase from Pseudarthrobacter chlorophenolicus (strain ATCC 700700 / DSM 12829 / CIP 107037 / JCM 12360 / KCTC 9906 / NCIMB 13794 / A6) (Arthrobacter chlorophenolicus).